The primary structure comprises 547 residues: Chaperonin GroEL (547 aa).

ATP-binding positions include 30–33, lysine 51, 87–91, glycine 415, 479–481, and aspartate 495; these read TLGP, DGTTT, and NAA. The interval 525–547 is disordered; that stretch reads PKEDSPGAGAGMGGMGGMGGMDM. Positions 532-547 are enriched in gly residues; that stretch reads AGAGMGGMGGMGGMDM.

Belongs to the chaperonin (HSP60) family. Forms a cylinder of 14 subunits composed of two heptameric rings stacked back-to-back. Interacts with the co-chaperonin GroES.

It localises to the cytoplasm. The enzyme catalyses ATP + H2O + a folded polypeptide = ADP + phosphate + an unfolded polypeptide.. Together with its co-chaperonin GroES, plays an essential role in assisting protein folding. The GroEL-GroES system forms a nano-cage that allows encapsulation of the non-native substrate proteins and provides a physical environment optimized to promote and accelerate protein folding. In Nitrosomonas europaea (strain ATCC 19718 / CIP 103999 / KCTC 2705 / NBRC 14298), this protein is Chaperonin GroEL.